We begin with the raw amino-acid sequence, 65 residues long: Large ribosomal subunit protein uL29 (65 aa).

It belongs to the universal ribosomal protein uL29 family.

This Methylococcus capsulatus (strain ATCC 33009 / NCIMB 11132 / Bath) protein is Large ribosomal subunit protein uL29.